A 365-amino-acid polypeptide reads, in one-letter code: NAD(P)H-quinone oxidoreductase subunit 1, chloroplastic (365 aa).

6 helical membrane passes run 32-52, 98-118, 129-149, 257-279, 302-322, and 338-358; these read LFPILILVLGITIGVLVIVWL, YLFSIGPSIAVISILLGYLII, LSIGVFLWIAVSSIAPIGLLM, LFYVASYLNLLISSLFVTVLYLG, VFGTTIGIFITLAKTFLFLFI, and LLNLGWKFLLPISLGNLLLTT.

This sequence belongs to the complex I subunit 1 family. NDH is composed of at least 16 different subunits, 5 of which are encoded in the nucleus.

The protein localises to the plastid. It is found in the chloroplast thylakoid membrane. It catalyses the reaction a plastoquinone + NADH + (n+1) H(+)(in) = a plastoquinol + NAD(+) + n H(+)(out). The enzyme catalyses a plastoquinone + NADPH + (n+1) H(+)(in) = a plastoquinol + NADP(+) + n H(+)(out). Its function is as follows. NDH shuttles electrons from NAD(P)H:plastoquinone, via FMN and iron-sulfur (Fe-S) centers, to quinones in the photosynthetic chain and possibly in a chloroplast respiratory chain. The immediate electron acceptor for the enzyme in this species is believed to be plastoquinone. Couples the redox reaction to proton translocation, and thus conserves the redox energy in a proton gradient. This chain is NAD(P)H-quinone oxidoreductase subunit 1, chloroplastic, found in Spinacia oleracea (Spinach).